A 294-amino-acid polypeptide reads, in one-letter code: Bifunctional protein FolD (294 aa).

NADP(+) is bound by residues 164 to 166 (GRS), S193, and I234.

The protein belongs to the tetrahydrofolate dehydrogenase/cyclohydrolase family. In terms of assembly, homodimer.

It catalyses the reaction (6R)-5,10-methylene-5,6,7,8-tetrahydrofolate + NADP(+) = (6R)-5,10-methenyltetrahydrofolate + NADPH. The enzyme catalyses (6R)-5,10-methenyltetrahydrofolate + H2O = (6R)-10-formyltetrahydrofolate + H(+). It functions in the pathway one-carbon metabolism; tetrahydrofolate interconversion. Functionally, catalyzes the oxidation of 5,10-methylenetetrahydrofolate to 5,10-methenyltetrahydrofolate and then the hydrolysis of 5,10-methenyltetrahydrofolate to 10-formyltetrahydrofolate. This Flavobacterium psychrophilum (strain ATCC 49511 / DSM 21280 / CIP 103535 / JIP02/86) protein is Bifunctional protein FolD.